Consider the following 431-residue polypeptide: MSKIVKVIGREIIDSRGNPTVEAEVHLEGGFVGLAAAPSGASTGSREALELRDGDKSRFLGKGVLKAVAAVNGPIAQAVIGKDAKDQANIDKIMIDLDGTENKSQFGANAILAVSLAAAKAAAASKGMPLYEHIAELNGTPGKFSMPLPMMNIINGGEHADNNVDIQEFMIQPVGAKTLKEAVRIGSEVFHTLAKVLKAKGMSTAVGDEGGYAPNLGSNAEALAVIAEAVKQAGYELGKDVTLAMDCAASEFYKDGKYVLAGEGNKAFTSEEFTHFLEDLTKQYPIVSIEDGLDESDWAGFKYQTEVLGDKIQLVGDDLFVTNTKILKEGIEKGVANSILIKFNQIGSLTETLAAIKMAKDAGYTAVISHRSGETEDATIADLAVGTAAGQIKTGSMSRSDRVAKYNQLIRIEEALGDRAPFNGLKEVKGQ.

Gln167 is a (2R)-2-phosphoglycerate binding site. Glu209 (proton donor) is an active-site residue. Asp246, Glu290, and Asp317 together coordinate Mg(2+). Residues Lys342, Arg371, Ser372, and Lys393 each coordinate (2R)-2-phosphoglycerate. Lys342 functions as the Proton acceptor in the catalytic mechanism.

The protein belongs to the enolase family. Component of the RNA degradosome, a multiprotein complex involved in RNA processing and mRNA degradation. Mg(2+) serves as cofactor.

It is found in the cytoplasm. The protein resides in the secreted. The protein localises to the cell surface. The enzyme catalyses (2R)-2-phosphoglycerate = phosphoenolpyruvate + H2O. The protein operates within carbohydrate degradation; glycolysis; pyruvate from D-glyceraldehyde 3-phosphate: step 4/5. In terms of biological role, catalyzes the reversible conversion of 2-phosphoglycerate (2-PG) into phosphoenolpyruvate (PEP). It is essential for the degradation of carbohydrates via glycolysis. The sequence is that of Enolase from Yersinia enterocolitica serotype O:8 / biotype 1B (strain NCTC 13174 / 8081).